The primary structure comprises 614 residues: Probable glutamate--tRNA ligase, cytoplasmic (614 aa).

Residue 130–132 participates in L-glutamate binding; that stretch reads RFA. The 'HIGH' region motif lies at 135–144; that stretch reads PSGCLHIGHL. His-140 is a binding site for ATP. Residues Asp-166, 303–307, and Arg-321 each bind L-glutamate; that span reads YDFVC. Residues Glu-324 and 359-363 contribute to the ATP site; that span reads VLSKR. The 'KMSKS' region signature appears at 359–363; the sequence is VLSKR.

The protein belongs to the class-I aminoacyl-tRNA synthetase family. Glutamate--tRNA ligase type 2 subfamily.

The protein resides in the cytoplasm. It carries out the reaction tRNA(Glu) + L-glutamate + ATP = L-glutamyl-tRNA(Glu) + AMP + diphosphate. The protein is Probable glutamate--tRNA ligase, cytoplasmic of Vairimorpha ceranae (strain BRL01) (Microsporidian parasite).